A 1281-amino-acid polypeptide reads, in one-letter code: Dynactin subunit 1 (1281 aa).

A disordered region spans residues Met-1–Arg-25. The 43-residue stretch at Gly-48–Arg-90 folds into the CAP-Gly domain. Positions Asp-99 to Arg-225 are disordered. Positions Asp-102–Ser-114 are enriched in polar residues. Phosphothreonine is present on residues Thr-108, Thr-145, Thr-146, and Thr-147. The segment covering Ser-129–Pro-152 has biased composition (basic residues). Over residues Ala-161 to Gly-205 the composition is skewed to low complexity. Phosphoserine is present on residues Ser-179 and Ser-212. Basic and acidic residues predominate over residues Ser-214 to Arg-225. 2 coiled-coil regions span residues Glu-217 to Ala-540 and Ile-952 to Arg-1043. The interval Glu-911 to Ser-1281 is interaction with HPS6. The tract at residues Gly-1065–Pro-1084 is disordered.

This sequence belongs to the dynactin 150 kDa subunit family. As to quaternary structure, monomer and homodimer. Subunit of dynactin, a multiprotein complex part of a tripartite complex with dynein and a adapter, such as BICDL1, BICD2 or HOOK3. The dynactin complex is built around ACTR1A/ACTB filament and consists of an actin-related filament composed of a shoulder domain, a pointed end and a barbed end. Its length is defined by its flexible shoulder domain. The soulder is composed of 2 DCTN1 subunits, 4 DCTN2 and 2 DCTN3. DCTN1/p150(glued) binds directly to microtubules and to cytoplasmic dynein. The 4 DCNT2 (via N-terminus) bind the ACTR1A filament and act as molecular rulers to determine the length. The pointed end is important for binding dynein-dynactin cargo adapters. Consists of 4 subunits: ACTR10, DCNT4, DCTN5 and DCTN6. The barbed end is composed of a CAPZA1:CAPZB heterodimers, which binds ACTR1A/ACTB filament and dynactin and stabilizes dynactin. Interacts with the C-terminus of MAPRE1, MAPRE2 and MAPRE3. Interacts (via C-terminus) with SNX6. Interacts with CLN3, DYNAP, ECPAS and FBXL5. Interacts with MISP; this interaction regulates its distribution at the cell cortex. Interacts with CEP131. Interacts with CEP126. Interacts with CLIP1. Interacts with dynein intermediate chain and dynein heavy chain. Interacts with PLK1 (via POLO-box domain). Interacts with TBCB. Binds preferentially to tyrosinated microtubules than to detyrosinated microtubules. Interacts with PARD6A. Interacts with HPS6. Interacts with KIF3A. Interacts with BICD2. Interacts with DST (isoform 9). Interacts with DST (isoform 1). Identified in a complex with MREG and RILP. Interacts with BCCIP (isoform 2/alpha). Interacts with DCDC1. Interacts with AKNA. Interacts with DYNC1I2. Interacts with RUFY3 and RUFY4. In terms of processing, ubiquitinated by a SCF complex containing FBXL5, leading to its degradation by the proteasome. Phosphorylation by SLK at Thr-145, Thr-146 and Thr-147 targets DCTN1 to the centrosome. It is uncertain if SLK phosphorylates all three threonines or one or two of them. PLK1-mediated phosphorylation at Ser-179 is essential for its localization in the nuclear envelope, promotes its dissociation from microtubules during early mitosis and positively regulates nuclear envelope breakdown during prophase.

Its subcellular location is the cytoplasm. The protein localises to the cytoskeleton. It localises to the microtubule organizing center. It is found in the centrosome. The protein resides in the centriole. Its subcellular location is the spindle. The protein localises to the nucleus envelope. It localises to the cell cortex. In terms of biological role, part of the dynactin complex that activates the molecular motor dynein for ultra-processive transport along microtubules. Plays a key role in dynein-mediated retrograde transport of vesicles and organelles along microtubules by recruiting and tethering dynein to microtubules. Binds to both dynein and microtubules providing a link between specific cargos, microtubules and dynein. Essential for targeting dynein to microtubule plus ends, recruiting dynein to membranous cargos and enhancing dynein processivity (the ability to move along a microtubule for a long distance without falling off the track). Can also act as a brake to slow the dynein motor during motility along the microtubule. Can regulate microtubule stability by promoting microtubule formation, nucleation and polymerization and by inhibiting microtubule catastrophe in neurons. Inhibits microtubule catastrophe by binding both to microtubules and to tubulin, leading to enhanced microtubule stability along the axon. Plays a role in metaphase spindle orientation. Plays a role in centriole cohesion and subdistal appendage organization and function. Its recruitment to the centriole in a KIF3A-dependent manner is essential for the maintenance of centriole cohesion and the formation of subdistal appendage. Also required for microtubule anchoring at the mother centriole. Plays a role in primary cilia formation. The protein is Dynactin subunit 1 (DCTN1) of Sus scrofa (Pig).